The primary structure comprises 350 residues: MSKFWSPFVKDLVPYVPGEQPKLTRLVKLNTNENPYGPSPKALAAMQAELNDNLRLYPDPNSDLLKNAVAKYYGVQNNQVFLGNGSDEVLAHIFHGLLQHDQPILFPDISYSFYPVYCGLYGITFDAVPLDAQFRINPADYAKPNGGIIFPNPNAPTGCLLALEAVEQILKGSPDSVVVVDEAYIDFGGETAISLVDRYPNLLVTQTLSKSRSLAGLRVGLAVGHPDLIEALERIKNSFNSYPIDRMANVGAAAAFEDREYFDKTCALVIESREWVVAQLQAKGFEVLPSAANFIFARHPQHDAAGLAAKLREQGVIVRHFKQERIAQFLRISIGTPEQNQALIDGLGEL.

Lys-210 bears the N6-(pyridoxal phosphate)lysine mark.

It belongs to the class-II pyridoxal-phosphate-dependent aminotransferase family. Histidinol-phosphate aminotransferase subfamily. Homodimer. It depends on pyridoxal 5'-phosphate as a cofactor.

It carries out the reaction L-histidinol phosphate + 2-oxoglutarate = 3-(imidazol-4-yl)-2-oxopropyl phosphate + L-glutamate. It participates in amino-acid biosynthesis; L-histidine biosynthesis; L-histidine from 5-phospho-alpha-D-ribose 1-diphosphate: step 7/9. This chain is Histidinol-phosphate aminotransferase 1, found in Pseudomonas fluorescens (strain Pf0-1).